Here is a 262-residue protein sequence, read N- to C-terminus: Phosphonates import ATP-binding protein PhnC (262 aa).

The ABC transporter domain occupies 5–253 (IRVEKLAKTF…RFDHLYRSIN (249 aa)). Residue 37 to 44 (GPSGSGKS) coordinates ATP.

It belongs to the ABC transporter superfamily. Phosphonates importer (TC 3.A.1.9.1) family. As to quaternary structure, the complex is composed of two ATP-binding proteins (PhnC), two transmembrane proteins (PhnE) and a solute-binding protein (PhnD).

The protein localises to the cell inner membrane. The catalysed reaction is phosphonate(out) + ATP + H2O = phosphonate(in) + ADP + phosphate + H(+). Its function is as follows. Part of the ABC transporter complex PhnCDE involved in phosphonates import. Responsible for energy coupling to the transport system. This Shigella sonnei (strain Ss046) protein is Phosphonates import ATP-binding protein PhnC.